The chain runs to 263 residues: 3'-5' ssDNA/RNA exonuclease TatD (263 aa).

Residues E91, H127, and H152 each contribute to the a divalent metal cation site.

The protein belongs to the metallo-dependent hydrolases superfamily. TatD-type hydrolase family. TatD subfamily. In terms of assembly, monomer. The cofactor is Mg(2+).

Its subcellular location is the cytoplasm. In terms of biological role, 3'-5' exonuclease that prefers single-stranded DNA and RNA. May play a role in the H(2)O(2)-induced DNA damage repair. This chain is 3'-5' ssDNA/RNA exonuclease TatD, found in Cronobacter sakazakii (strain ATCC BAA-894) (Enterobacter sakazakii).